The sequence spans 154 residues: Endoribonuclease YbeY (154 aa).

Residues His113, His117, and His123 each contribute to the Zn(2+) site.

This sequence belongs to the endoribonuclease YbeY family. The cofactor is Zn(2+).

The protein localises to the cytoplasm. Functionally, single strand-specific metallo-endoribonuclease involved in late-stage 70S ribosome quality control and in maturation of the 3' terminus of the 16S rRNA. The sequence is that of Endoribonuclease YbeY from Vibrio cholerae serotype O1 (strain ATCC 39315 / El Tor Inaba N16961).